The chain runs to 418 residues: Serpin A3-8 (418 aa).

An N-terminal signal peptide occupies residues 1–25 (MRAERMSPLLALGLLVSGLCSRVHC). N-linked (GlcNAc...) asparagine glycans are attached at residues asparagine 103, asparagine 183, asparagine 233, and asparagine 268.

It belongs to the serpin family. Homodimer.

Its subcellular location is the cytoplasmic vesicle. The protein resides in the secretory vesicle. The protein localises to the chromaffin granule. It localises to the secreted. Its function is as follows. Serine protease inhibitor. The chain is Serpin A3-8 from Bos taurus (Bovine).